The following is a 188-amino-acid chain: Probable nicotinate-nucleotide adenylyltransferase (188 aa).

It belongs to the NadD family.

It catalyses the reaction nicotinate beta-D-ribonucleotide + ATP + H(+) = deamido-NAD(+) + diphosphate. It participates in cofactor biosynthesis; NAD(+) biosynthesis; deamido-NAD(+) from nicotinate D-ribonucleotide: step 1/1. Catalyzes the reversible adenylation of nicotinate mononucleotide (NaMN) to nicotinic acid adenine dinucleotide (NaAD). In Listeria monocytogenes serotype 4b (strain F2365), this protein is Probable nicotinate-nucleotide adenylyltransferase.